The chain runs to 266 residues: Amylovoran biosynthesis glycosyltransferase AmsE (266 aa).

It belongs to the glycosyltransferase 2 family.

It participates in glycan metabolism; exopolysaccharide biosynthesis. Functionally, involved in the biosynthesis of amylovoran which functions as a virulence factor. This Erwinia amylovora (Fire blight bacteria) protein is Amylovoran biosynthesis glycosyltransferase AmsE (amsE).